A 251-amino-acid chain; its full sequence is Protein crossbronx (251 aa).

Positions glutamine 20–alanine 176 constitute a UBC core domain. The disordered stretch occupies residues glutamine 211–glutamate 251. Residues glycine 225 to alanine 234 are compositionally biased toward gly residues.

The protein belongs to the ubiquitin-conjugating enzyme family. FTS subfamily.

This is Protein crossbronx (cbx) from Drosophila willistoni (Fruit fly).